The sequence spans 172 residues: Peptide methionine sulfoxide reductase MsrA 1 (172 aa).

Cys14 is a catalytic residue.

This sequence belongs to the MsrA Met sulfoxide reductase family.

The catalysed reaction is L-methionyl-[protein] + [thioredoxin]-disulfide + H2O = L-methionyl-(S)-S-oxide-[protein] + [thioredoxin]-dithiol. It catalyses the reaction [thioredoxin]-disulfide + L-methionine + H2O = L-methionine (S)-S-oxide + [thioredoxin]-dithiol. Has an important function as a repair enzyme for proteins that have been inactivated by oxidation. Catalyzes the reversible oxidation-reduction of methionine sulfoxide in proteins to methionine. This Mesorhizobium japonicum (strain LMG 29417 / CECT 9101 / MAFF 303099) (Mesorhizobium loti (strain MAFF 303099)) protein is Peptide methionine sulfoxide reductase MsrA 1 (msrA1).